The chain runs to 133 residues: Phosphomevalonate dehydratase small subunit (133 aa).

Catalysis depends on serine 62, which acts as the Proton acceptor.

Belongs to the AcnX type II small subunit family. Heterodimer composed of a large subunit (PMDh-L) and a small subunit (PMDh-S).

It carries out the reaction (R)-5-phosphomevalonate = (2E)-3-methyl-5-phosphooxypent-2-enoate + H2O. It participates in isoprenoid biosynthesis; isopentenyl diphosphate biosynthesis via mevalonate pathway. Functionally, component of a hydro-lyase that catalyzes the dehydration of mevalonate 5-phosphate (MVA5P) to form trans-anhydromevalonate 5-phosphate (tAHMP). Involved in the archaeal mevalonate (MVA) pathway, which provides fundamental precursors for isoprenoid biosynthesis, such as isopentenyl diphosphate (IPP) and dimethylallyl diphosphate (DMAPP). This is Phosphomevalonate dehydratase small subunit from Thermococcus kodakarensis (strain ATCC BAA-918 / JCM 12380 / KOD1) (Pyrococcus kodakaraensis (strain KOD1)).